Consider the following 417-residue polypeptide: Gamma-glutamyl phosphate reductase (417 aa).

Belongs to the gamma-glutamyl phosphate reductase family.

Its subcellular location is the cytoplasm. It catalyses the reaction L-glutamate 5-semialdehyde + phosphate + NADP(+) = L-glutamyl 5-phosphate + NADPH + H(+). It participates in amino-acid biosynthesis; L-proline biosynthesis; L-glutamate 5-semialdehyde from L-glutamate: step 2/2. Catalyzes the NADPH-dependent reduction of L-glutamate 5-phosphate into L-glutamate 5-semialdehyde and phosphate. The product spontaneously undergoes cyclization to form 1-pyrroline-5-carboxylate. This Shigella flexneri serotype 5b (strain 8401) protein is Gamma-glutamyl phosphate reductase.